We begin with the raw amino-acid sequence, 812 residues long: Eukaryotic translation initiation factor 3 subunit C (812 aa).

Positions Met1–Lys105 are disordered. 2 stretches are compositionally biased toward acidic residues: residues Ser17–Ser40 and Ser48–Ser59. The PCI domain maps to Phe607–Glu783.

It belongs to the eIF-3 subunit C family. In terms of assembly, component of the eukaryotic translation initiation factor 3 (eIF-3) complex.

It is found in the cytoplasm. Functionally, component of the eukaryotic translation initiation factor 3 (eIF-3) complex, which is involved in protein synthesis of a specialized repertoire of mRNAs and, together with other initiation factors, stimulates binding of mRNA and methionyl-tRNAi to the 40S ribosome. The eIF-3 complex specifically targets and initiates translation of a subset of mRNAs involved in cell proliferation. The polypeptide is Eukaryotic translation initiation factor 3 subunit C (Eremothecium gossypii (strain ATCC 10895 / CBS 109.51 / FGSC 9923 / NRRL Y-1056) (Yeast)).